The chain runs to 75 residues: Small ribosomal subunit protein bS21 (75 aa).

The protein belongs to the bacterial ribosomal protein bS21 family.

This chain is Small ribosomal subunit protein bS21, found in Brucella abortus (strain S19).